A 396-amino-acid polypeptide reads, in one-letter code: DnaJ homolog subfamily A member 1 (396 aa).

Residues 6–68 (TYYDVLGVKP…KKRELYDKGG (63 aa)) form the J domain. Lys66 carries the N6-acetyllysine modification. The residue at position 83 (Ser83) is a Phosphoserine. Residues 120-204 (GATRKLALQK…CNGRKIVREK (85 aa)) form a CR-type zinc finger. Cys133, Cys136, Cys149, Cys152, Cys176, Cys179, Cys192, and Cys195 together coordinate Zn(2+). CXXCXGXG motif repeat units follow at residues 133–140 (CDKCEGRG), 149–156 (CPNCRGTG), 176–183 (CMECQGHG), and 192–199 (CKSCNGRK). Ser334 is subject to Phosphoserine. Residues 351–396 (VEETDEMDQVELVDFDPNQERRRHYNGEAYEDDEHHPRGGVQCQTS) form a disordered region. The segment covering 352–364 (EETDEMDQVELVD) has biased composition (acidic residues). At Tyr380 the chain carries Phosphotyrosine. Cys393 is subject to Cysteine methyl ester. The S-farnesyl cysteine moiety is linked to residue Cys393. Positions 394 to 396 (QTS) are cleaved as a propeptide — removed in mature form.

As to quaternary structure, identified in a complex with HSPA1B and BAX. Interacts with RNF207.

It localises to the membrane. The protein localises to the cytoplasm. It is found in the microsome. Its subcellular location is the mitochondrion. The protein resides in the nucleus. It localises to the perinuclear region. Functionally, co-chaperone for HSPA8/Hsc70. Plays a role in protein transport into mitochondria via its role as co-chaperone. Functions as co-chaperone for HSPA1B and negatively regulates the translocation of BAX from the cytosol to mitochondria in response to cellular stress, thereby protecting cells against apoptosis. Stimulates ATP hydrolysis, but not the folding of unfolded proteins mediated by HSPA1A (in vitro). Promotes apoptosis in response to cellular stress mediated by exposure to anisomycin or UV. This chain is DnaJ homolog subfamily A member 1 (DNAJA1), found in Pongo abelii (Sumatran orangutan).